Reading from the N-terminus, the 192-residue chain is U1 small nuclear ribonucleoprotein C (192 aa).

The Matrin-type zinc finger occupies 4–36; the sequence is YYCEYCDIYLTHSSPVGRRQHNQGRKHISAKIE. The tract at residues 118 to 192 is disordered; that stretch reads PGANKYPNNN…FVNKNSEQPN (75 aa). A compositionally biased stretch (polar residues) spans 133 to 154; it reads RISNTPKPYNNYTNKPITNSPY. The segment covering 164–173 has biased composition (low complexity); that stretch reads NNENSNNFSN. Polar residues predominate over residues 174–192; that stretch reads YQMNKDNSNFVNKNSEQPN.

Belongs to the U1 small nuclear ribonucleoprotein C family. In terms of assembly, U1 snRNP is composed of the 7 core Sm proteins B/B', D1, D2, D3, E, F and G that assemble in a heptameric protein ring on the Sm site of the small nuclear RNA to form the core snRNP, and at least 3 U1 snRNP-specific proteins U1-70K, U1-A and U1-C. U1-C interacts with U1 snRNA and the 5' splice-site region of the pre-mRNA.

It localises to the nucleus. Its function is as follows. Component of the spliceosomal U1 snRNP, which is essential for recognition of the pre-mRNA 5' splice-site and the subsequent assembly of the spliceosome. U1-C is directly involved in initial 5' splice-site recognition for both constitutive and regulated alternative splicing. The interaction with the 5' splice-site seems to precede base-pairing between the pre-mRNA and the U1 snRNA. Stimulates commitment or early (E) complex formation by stabilizing the base pairing of the 5' end of the U1 snRNA and the 5' splice-site region. In Plasmodium chabaudi chabaudi, this protein is U1 small nuclear ribonucleoprotein C.